We begin with the raw amino-acid sequence, 400 residues long: Putative cytochrome P450 133B2 (400 aa).

Position 348 (cysteine 348) interacts with heme.

The protein belongs to the cytochrome P450 family. Heme is required as a cofactor.

The polypeptide is Putative cytochrome P450 133B2 (cyp133B2) (Xylella fastidiosa (strain 9a5c)).